Here is a 106-residue protein sequence, read N- to C-terminus: Chaperone modulatory protein CbpM (106 aa).

It belongs to the CbpM family.

Functionally, interacts with CbpA and inhibits both the DnaJ-like co-chaperone activity and the DNA binding activity of CbpA. Together with CbpA, modulates the activity of the DnaK chaperone system. Does not inhibit the co-chaperone activity of DnaJ. The chain is Chaperone modulatory protein CbpM from Coxiella burnetii (strain CbuK_Q154) (Coxiella burnetii (strain Q154)).